Here is a 435-residue protein sequence, read N- to C-terminus: MKPINVGLLGIGTVGGGTYTVLTRNQEGNRAPCRPPNCHHARRDRNLELARKVTGGQIDVTDDAFAVVVRPRHRHRGRIDRRIHHRARTGYEGDRERQARVAANKALMLAWQRDFRRVAQQKGVIVAFEAAVAGGIPIIKAVAAGAGRQPSSRVLRAIINGTTNFILSEMREKGLAFADVLKEAQPRLCEATRPSTSRAWTAHKLMILAAIGFGIPMQFDKAYVEGISKLDALDIRYAEELGYRQAAWHAPSAPARGVELARAPDPDPRETPDRQCQRRHNAVLVSDACRSHLVYRPDACRRHASAVVADIVDGTRTAYHRRAPAVPHLLSSPTSSWTCRFAIGEVSSAYYLRLRAVDKPGRDGHVTRILATGSLHRCDDSEGNRRQAERRRSGRHHHPDHVTVEKNMDDAIVAIEALPAISGSVTRLRMEELSR.

Thr13, Val14, Arg43, and Lys105 together coordinate NADPH. Val14 serves as a coordination point for NAD(+). Positions 14, 43, and 105 each coordinate NADP(+). Residues Glu129, Val132, Gly134, and Ile136 each contribute to the Na(+) site. Catalysis depends on Lys204, which acts as the Proton donor. Disordered stretches follow at residues 255-274 and 377-402; these read ARGV…TPDR and RCDD…PDHV. Basic and acidic residues-rich tracts occupy residues 262–274 and 377–391; these read RAPD…TPDR and RCDD…AERR.

The protein belongs to the homoserine dehydrogenase family. The cofactor is a metal cation.

It carries out the reaction L-homoserine + NADP(+) = L-aspartate 4-semialdehyde + NADPH + H(+). It catalyses the reaction L-homoserine + NAD(+) = L-aspartate 4-semialdehyde + NADH + H(+). The protein operates within amino-acid biosynthesis; L-methionine biosynthesis via de novo pathway; L-homoserine from L-aspartate: step 3/3. It participates in amino-acid biosynthesis; L-threonine biosynthesis; L-threonine from L-aspartate: step 3/5. Its function is as follows. Catalyzes the conversion of L-aspartate-beta-semialdehyde (L-Asa) to L-homoserine (L-Hse), the third step in the biosynthesis of threonine and methionine from aspartate. The sequence is that of Homoserine dehydrogenase (hom) from Methylobacillus glycogenes.